Reading from the N-terminus, the 648-residue chain is Replication restart protein PriA (648 aa).

The region spanning 131-297 is the Helicase ATP-binding domain; sequence TILNESNKPT…EIGKYQLVTL (167 aa). 144-151 provides a ligand contact to ATP; it reads GVTGSGKT. Residues 240–243 carry the DEAH box motif; it reads DEEH. Zn(2+) contacts are provided by Cys-358, Cys-361, Cys-367, Cys-370, Cys-385, Cys-388, Cys-398, and Cys-401. The Helicase C-terminal domain maps to 393 to 548; the sequence is KIFSSCPECL…SFFANELEIR (156 aa).

The protein belongs to the helicase family. PriA subfamily. As to quaternary structure, component of the replication restart primosome. It depends on Zn(2+) as a cofactor.

It catalyses the reaction Couples ATP hydrolysis with the unwinding of duplex DNA by translocating in the 3'-5' direction.. The enzyme catalyses ATP + H2O = ADP + phosphate + H(+). Functionally, initiates the restart of stalled replication forks, which reloads the replicative helicase on sites other than the origin of replication. Recognizes and binds to abandoned replication forks and remodels them to uncover a helicase loading site. Promotes assembly of the primosome at these replication forks. In Rickettsia conorii (strain ATCC VR-613 / Malish 7), this protein is Replication restart protein PriA.